The primary structure comprises 423 residues: Type II methyltransferase M.BamHI (423 aa).

Over residues 397-414 (DFRQDHEGNSKGDKKNEN) the composition is skewed to basic and acidic residues. The tract at residues 397–423 (DFRQDHEGNSKGDKKNENNDQISLSLE) is disordered.

It belongs to the N(4)/N(6)-methyltransferase family.

The catalysed reaction is a 2'-deoxycytidine in DNA + S-adenosyl-L-methionine = an N(4)-methyl-2'-deoxycytidine in DNA + S-adenosyl-L-homocysteine + H(+). In terms of biological role, a beta subtype methylase, recognizes the double-stranded sequence 5'-GGATCC-3', methylates C-5 on both strands, and protects the DNA from cleavage by the BamHI endonuclease. The protein is Type II methyltransferase M.BamHI of Bacillus amyloliquefaciens (Bacillus velezensis).